The following is an 89-amino-acid chain: Small ribosomal subunit protein uS14 (89 aa).

It belongs to the universal ribosomal protein uS14 family. Part of the 30S ribosomal subunit. Contacts proteins S3 and S10.

Its function is as follows. Binds 16S rRNA, required for the assembly of 30S particles and may also be responsible for determining the conformation of the 16S rRNA at the A site. The polypeptide is Small ribosomal subunit protein uS14 (Pelodictyon phaeoclathratiforme (strain DSM 5477 / BU-1)).